We begin with the raw amino-acid sequence, 87 residues long: UPF0335 protein Meso_3367 (87 aa).

It belongs to the UPF0335 family.

The sequence is that of UPF0335 protein Meso_3367 from Chelativorans sp. (strain BNC1).